We begin with the raw amino-acid sequence, 139 residues long: Large ribosomal subunit protein uL16 (139 aa).

The protein belongs to the universal ribosomal protein uL16 family. As to quaternary structure, part of the 50S ribosomal subunit.

Binds 23S rRNA and is also seen to make contacts with the A and possibly P site tRNAs. The polypeptide is Large ribosomal subunit protein uL16 (Parvibaculum lavamentivorans (strain DS-1 / DSM 13023 / NCIMB 13966)).